Consider the following 111-residue polypeptide: Phosphoribosyl-ATP pyrophosphatase (111 aa).

It belongs to the PRA-PH family.

It localises to the cytoplasm. It carries out the reaction 1-(5-phospho-beta-D-ribosyl)-ATP + H2O = 1-(5-phospho-beta-D-ribosyl)-5'-AMP + diphosphate + H(+). Its pathway is amino-acid biosynthesis; L-histidine biosynthesis; L-histidine from 5-phospho-alpha-D-ribose 1-diphosphate: step 2/9. The protein is Phosphoribosyl-ATP pyrophosphatase of Azotobacter vinelandii (strain DJ / ATCC BAA-1303).